A 273-amino-acid polypeptide reads, in one-letter code: NADPH-dependent 7-cyano-7-deazaguanine reductase (273 aa).

Residue 81-83 (VES) coordinates substrate. Residue 83 to 84 (SK) participates in NADPH binding. Cysteine 179 serves as the catalytic Thioimide intermediate. Aspartate 186 acts as the Proton donor in catalysis. Residue 218 to 219 (AE) coordinates substrate. 247–248 (RG) is an NADPH binding site.

The protein belongs to the GTP cyclohydrolase I family. QueF type 2 subfamily. As to quaternary structure, homodimer.

The protein localises to the cytoplasm. The enzyme catalyses 7-aminomethyl-7-carbaguanine + 2 NADP(+) = 7-cyano-7-deazaguanine + 2 NADPH + 3 H(+). It participates in tRNA modification; tRNA-queuosine biosynthesis. Functionally, catalyzes the NADPH-dependent reduction of 7-cyano-7-deazaguanine (preQ0) to 7-aminomethyl-7-deazaguanine (preQ1). In Rickettsia akari (strain Hartford), this protein is NADPH-dependent 7-cyano-7-deazaguanine reductase.